A 446-amino-acid polypeptide reads, in one-letter code: Glutamyl-tRNA(Gln) amidotransferase subunit D (446 aa).

An Asparaginase/glutaminase domain is found at 90–421 (SEVMIISTGG…DRIKEIMLTN (332 aa)). Residues Thr-100, Thr-176, Asp-177, and Lys-255 contribute to the active site.

It belongs to the asparaginase 1 family. GatD subfamily. Heterodimer of GatD and GatE.

It carries out the reaction L-glutamyl-tRNA(Gln) + L-glutamine + ATP + H2O = L-glutaminyl-tRNA(Gln) + L-glutamate + ADP + phosphate + H(+). Allows the formation of correctly charged Gln-tRNA(Gln) through the transamidation of misacylated Glu-tRNA(Gln) in organisms which lack glutaminyl-tRNA synthetase. The reaction takes place in the presence of glutamine and ATP through an activated gamma-phospho-Glu-tRNA(Gln). The GatDE system is specific for glutamate and does not act on aspartate. The polypeptide is Glutamyl-tRNA(Gln) amidotransferase subunit D (Sulfolobus acidocaldarius (strain ATCC 33909 / DSM 639 / JCM 8929 / NBRC 15157 / NCIMB 11770)).